We begin with the raw amino-acid sequence, 137 residues long: Small ribosomal subunit protein uS12 (137 aa).

Residues 1–57 form a disordered region; it reads MPTINQLVRKPRKSKVEKSKSPALNVGYNSHKKVQTNVSSPQKRGVATRVGTMTPKK. Asp102 is subject to 3-methylthioaspartic acid.

Belongs to the universal ribosomal protein uS12 family. As to quaternary structure, part of the 30S ribosomal subunit. Contacts proteins S8 and S17. May interact with IF1 in the 30S initiation complex.

With S4 and S5 plays an important role in translational accuracy. In terms of biological role, interacts with and stabilizes bases of the 16S rRNA that are involved in tRNA selection in the A site and with the mRNA backbone. Located at the interface of the 30S and 50S subunits, it traverses the body of the 30S subunit contacting proteins on the other side and probably holding the rRNA structure together. The combined cluster of proteins S8, S12 and S17 appears to hold together the shoulder and platform of the 30S subunit. The chain is Small ribosomal subunit protein uS12 from Streptococcus pneumoniae serotype 2 (strain D39 / NCTC 7466).